A 402-amino-acid chain; its full sequence is p-cumate 2,3-dioxygenase system, ferredoxin--NAD(+) reductase component (402 aa).

5 residues coordinate FAD: alanine 16, lysine 51, valine 83, arginine 131, and aspartate 275.

This sequence belongs to the FAD-dependent oxidoreductase family. As to quaternary structure, the p-cumate 2,3-dioxygenase multicomponent enzyme system is composed of an electron transfer component and a dioxygenase component (iron sulfur protein (ISP)). The electron transfer component is composed of a ferredoxin reductase (CmtAa) and a ferredoxin (CmtAd), and the dioxygenase component is formed of a large alpha subunit (CmtAb) and a small beta subunit (CmtAc). FAD serves as cofactor.

The catalysed reaction is 2 reduced [2Fe-2S]-[ferredoxin] + NAD(+) + H(+) = 2 oxidized [2Fe-2S]-[ferredoxin] + NADH. It participates in aromatic compound metabolism; p-cumate degradation; acetaldehyde and pyruvate from p-cumate. Component of the p-cumate 2,3-dioxygenase multicomponent enzyme system which catalyzes the incorporation of both atoms of molecular oxygen into p-cumate to form cis-2,3-dihydroxy-2,3-dihydro-p-cumate. Ferredoxin reductase catalyzes the transfer of electrons from NADH to ferredoxin (CmtAd). The protein is p-cumate 2,3-dioxygenase system, ferredoxin--NAD(+) reductase component of Pseudomonas putida (Arthrobacter siderocapsulatus).